The primary structure comprises 92 residues: Transcriptional regulator WhiB1 (92 aa).

The 4Fe-4S Wbl-type domain maps to alanine 12–alanine 74. [4Fe-4S] cluster-binding residues include cysteine 13, cysteine 41, cysteine 44, and cysteine 50.

This sequence belongs to the WhiB family. It depends on [4Fe-4S] cluster as a cofactor. In terms of processing, the Fe-S cluster can be nitrosylated by nitric oxide (NO). Upon Fe-S cluster removal intramolecular disulfide bonds are formed.

Its subcellular location is the cytoplasm. Acts as a transcriptional regulator. Probably redox-responsive. The apo- but not holo-form probably binds DNA. The protein is Transcriptional regulator WhiB1 (whiB1) of Bifidobacterium longum (strain NCC 2705).